The following is a 283-amino-acid chain: Putative transposase InsK for insertion sequence element IS150 (283 aa).

The region spanning 117-279 (KATRPNEKWV…TPIEYRNQTY (163 aa)) is the Integrase catalytic domain.

The protein belongs to the transposase IS3/IS150/IS904 family.

Involved in the transposition of the insertion sequence IS150. In Escherichia coli (strain K12), this protein is Putative transposase InsK for insertion sequence element IS150 (insK).